The chain runs to 66 residues: MPKMKTKKAAAKRFKITATGKLKHGVAGKRHRLMSHNAKYIRQNRGTSVGAKADEARVKKYLPYGL.

It belongs to the bacterial ribosomal protein bL35 family.

The polypeptide is Large ribosomal subunit protein bL35 (Hyphomonas neptunium (strain ATCC 15444)).